A 362-amino-acid polypeptide reads, in one-letter code: Phosphoserine aminotransferase (362 aa).

An L-glutamate-binding site is contributed by Arg43. Residues Ala77–Arg78, Trp103, Thr153, Asp173, and Gln196 each bind pyridoxal 5'-phosphate. Lys197 is modified (N6-(pyridoxal phosphate)lysine).

This sequence belongs to the class-V pyridoxal-phosphate-dependent aminotransferase family. SerC subfamily. Homodimer. The cofactor is pyridoxal 5'-phosphate.

It localises to the cytoplasm. The catalysed reaction is O-phospho-L-serine + 2-oxoglutarate = 3-phosphooxypyruvate + L-glutamate. The enzyme catalyses 4-(phosphooxy)-L-threonine + 2-oxoglutarate = (R)-3-hydroxy-2-oxo-4-phosphooxybutanoate + L-glutamate. It participates in amino-acid biosynthesis; L-serine biosynthesis; L-serine from 3-phospho-D-glycerate: step 2/3. The protein operates within cofactor biosynthesis; pyridoxine 5'-phosphate biosynthesis; pyridoxine 5'-phosphate from D-erythrose 4-phosphate: step 3/5. Functionally, catalyzes the reversible conversion of 3-phosphohydroxypyruvate to phosphoserine and of 3-hydroxy-2-oxo-4-phosphonooxybutanoate to phosphohydroxythreonine. The chain is Phosphoserine aminotransferase from Legionella pneumophila (strain Lens).